The sequence spans 83 residues: MKTLLLTLVVVTIVCLDLGYTMTCYNQQSSEAKTTTTCSGGVSSCYKETWYDGRGTRIERGCGCPRAKKGIERICCGTDKCNN.

Residues 1 to 21 (MKTLLLTLVVVTIVCLDLGYT) form the signal peptide. Intrachain disulfides connect C24–C45, C38–C62, C64–C75, and C76–C81.

The protein belongs to the three-finger toxin family. Short-chain subfamily. Type I alpha-neurotoxin sub-subfamily. In terms of tissue distribution, expressed by the venom gland.

It is found in the secreted. Its function is as follows. Binds to muscle nicotinic acetylcholine receptor (nAChR) and inhibit acetylcholine from binding to the receptor, thereby impairing neuromuscular transmission. This chain is Short neurotoxin 3FTx-Oxy4, found in Oxyuranus microlepidotus (Inland taipan).